Consider the following 180-residue polypeptide: Large ribosomal subunit protein uL5 (180 aa).

The protein belongs to the universal ribosomal protein uL5 family. Part of the 50S ribosomal subunit; part of the 5S rRNA/L5/L18/L25 subcomplex. Contacts the 5S rRNA and the P site tRNA. Forms a bridge to the 30S subunit in the 70S ribosome.

Functionally, this is one of the proteins that bind and probably mediate the attachment of the 5S RNA into the large ribosomal subunit, where it forms part of the central protuberance. In the 70S ribosome it contacts protein S13 of the 30S subunit (bridge B1b), connecting the 2 subunits; this bridge is implicated in subunit movement. Contacts the P site tRNA; the 5S rRNA and some of its associated proteins might help stabilize positioning of ribosome-bound tRNAs. The polypeptide is Large ribosomal subunit protein uL5 (Chlamydia abortus (strain DSM 27085 / S26/3) (Chlamydophila abortus)).